Consider the following 620-residue polypeptide: 1-deoxy-D-xylulose-5-phosphate synthase (620 aa).

Thiamine diphosphate-binding positions include His-80 and 121-123 (GHS). Residue Asp-152 coordinates Mg(2+). Thiamine diphosphate-binding positions include 153 to 154 (GA), Asn-181, Tyr-288, and Glu-370. Asn-181 is a binding site for Mg(2+).

Belongs to the transketolase family. DXPS subfamily. Homodimer. Mg(2+) serves as cofactor. It depends on thiamine diphosphate as a cofactor.

The catalysed reaction is D-glyceraldehyde 3-phosphate + pyruvate + H(+) = 1-deoxy-D-xylulose 5-phosphate + CO2. The protein operates within metabolic intermediate biosynthesis; 1-deoxy-D-xylulose 5-phosphate biosynthesis; 1-deoxy-D-xylulose 5-phosphate from D-glyceraldehyde 3-phosphate and pyruvate: step 1/1. Functionally, catalyzes the acyloin condensation reaction between C atoms 2 and 3 of pyruvate and glyceraldehyde 3-phosphate to yield 1-deoxy-D-xylulose-5-phosphate (DXP). This Escherichia coli O139:H28 (strain E24377A / ETEC) protein is 1-deoxy-D-xylulose-5-phosphate synthase.